Here is a 219-residue protein sequence, read N- to C-terminus: HTH-type transcriptional regulator LutR (219 aa).

One can recognise an HTH gntR-type domain in the interval 1 to 56 (MIKNGELKPGDKLDSVQALAESFQVSRSAVREALSALKAMGLVEMKQGEGTYLKEF). The segment at residues 16–35 (VQALAESFQVSRSAVREALS) is a DNA-binding region (H-T-H motif).

Functionally, negatively regulates the transcription of the lutABC operon, which is required for L-lactate utilization. LutR activity is regulated by lactate, since presence of L-lactate, that probably binds to LutR, leads to derepression of the operon. Also appears to be essential for bacilysin biosynthesis. This Bacillus subtilis (strain 168) protein is HTH-type transcriptional regulator LutR (lutR).